Here is an 82-residue protein sequence, read N- to C-terminus: Small ribosomal subunit protein bS16 (82 aa).

This sequence belongs to the bacterial ribosomal protein bS16 family.

The sequence is that of Small ribosomal subunit protein bS16 from Marinomonas sp. (strain MWYL1).